Here is a 227-residue protein sequence, read N- to C-terminus: Probable methylthioribulose-1-phosphate dehydratase (227 aa).

Position 87 (cysteine 87) interacts with substrate. The Zn(2+) site is built by histidine 105 and histidine 107. The active-site Proton donor/acceptor is the glutamate 129. Residue histidine 185 coordinates Zn(2+).

Belongs to the aldolase class II family. MtnB subfamily. Zn(2+) is required as a cofactor.

The protein localises to the cytoplasm. The catalysed reaction is 5-(methylsulfanyl)-D-ribulose 1-phosphate = 5-methylsulfanyl-2,3-dioxopentyl phosphate + H2O. It functions in the pathway amino-acid biosynthesis; L-methionine biosynthesis via salvage pathway; L-methionine from S-methyl-5-thio-alpha-D-ribose 1-phosphate: step 2/6. Its function is as follows. Catalyzes the dehydration of methylthioribulose-1-phosphate (MTRu-1-P) into 2,3-diketo-5-methylthiopentyl-1-phosphate (DK-MTP-1-P). The protein is Probable methylthioribulose-1-phosphate dehydratase of Drosophila melanogaster (Fruit fly).